Here is a 695-residue protein sequence, read N- to C-terminus: MSANKNIWIIRLGVAFVCVAIGAAQANEKDGSAVTSGNWSLLGGGNEQHYFSALKDVNKSNVKNLGLSWFTDMEAGDGLVGNPLVADGVIYQGGPPGKIYANDLKTGKNLWTYTPEVQYDKDTSWTGFWGTHVNRGLAVDDDNVYIGSYCKLLAVSRTTHKLTWSSQSCDPKKMQAITGAPRVGGGKVFIGNASGDFGGDRGHLDAFDAKTGKHLWRFYTMPGDPSKPFENDLLAKASKTWGTDYWKYTKGGVSPWDAITYDEASDTLYFGTDGPSPWSPAQRAPDAGDELFSHSIIAVDASTGAYKWHFQTVQNDGSNMSATMHIMLADLPVEGVSKRVVMTAPKNGYFYVLDASTGKFISADHYVPVNWTKGLDPKTGRPIPSNEANYWERPGEMTIPLPGDVGGHNWEAMAYNPELRTVYIPSTLVPVTVVASKDTGELDLDYYYGMRPDATIKTQGDLVAWDPLLQKEKWRAKRSLPVNGGVLATAGGLVFQGTGDGHFEAFDANTGEKLWSFHVGGSILAAPTTVEVDGDQYLIVASGNGGASGMRGIPRLMNNLQSQGPARLLAFRLGGKTELPITSTPDFPKPQYPKPTSAMAESGRHIFNANACGACHGFNAEGSTPGLPDLRRSDKLDLAVMKSIVIDGAFKPLGMPGHPHISDADLQALQAFILQKAWTAYDTQQTLKTSDTGAQ.

An N-terminal signal peptide occupies residues 1–26 (MSANKNIWIIRLGVAFVCVAIGAAQA). Positions 598-677 (AMAESGRHIF…ALQAFILQKA (80 aa)) constitute a Cytochrome c domain. Residues Cys612, Cys615, and His616 each contribute to the heme c site.

This sequence belongs to the bacterial PQQ dehydrogenase family. Monomer. The cofactor is pyrroloquinoline quinone. Heme c serves as cofactor.

It is found in the periplasm. It catalyses the reaction lupanine + 2 Fe(III)-[cytochrome c] + H2O = 17-hydroxylupanine + 2 Fe(II)-[cytochrome c] + 2 H(+). Catalyzes the first reaction in the catabolism of the alkaloid lupanine. It dehydrogenates lupanine, which can then be hydrated to produce 17-hydroxylupanine. The protein is Lupanine 17-hydroxylase [cytochrome c] (luh) of Pseudomonas sp.